The sequence spans 505 residues: Aspartyl/glutamyl-tRNA(Asn/Gln) amidotransferase subunit B (505 aa).

This sequence belongs to the GatB/GatE family. GatB subfamily. In terms of assembly, heterotrimer of A, B and C subunits.

The enzyme catalyses L-glutamyl-tRNA(Gln) + L-glutamine + ATP + H2O = L-glutaminyl-tRNA(Gln) + L-glutamate + ADP + phosphate + H(+). The catalysed reaction is L-aspartyl-tRNA(Asn) + L-glutamine + ATP + H2O = L-asparaginyl-tRNA(Asn) + L-glutamate + ADP + phosphate + 2 H(+). Allows the formation of correctly charged Asn-tRNA(Asn) or Gln-tRNA(Gln) through the transamidation of misacylated Asp-tRNA(Asn) or Glu-tRNA(Gln) in organisms which lack either or both of asparaginyl-tRNA or glutaminyl-tRNA synthetases. The reaction takes place in the presence of glutamine and ATP through an activated phospho-Asp-tRNA(Asn) or phospho-Glu-tRNA(Gln). The polypeptide is Aspartyl/glutamyl-tRNA(Asn/Gln) amidotransferase subunit B (Streptomyces avermitilis (strain ATCC 31267 / DSM 46492 / JCM 5070 / NBRC 14893 / NCIMB 12804 / NRRL 8165 / MA-4680)).